A 376-amino-acid chain; its full sequence is Erythronate-4-phosphate dehydrogenase (376 aa).

Positions 45 and 67 each coordinate substrate. D147 lines the NAD(+) pocket. Residue R209 is part of the active site. D233 contributes to the NAD(+) binding site. E238 is a catalytic residue. H255 serves as the catalytic Proton donor. G258 contacts NAD(+). Y259 is a substrate binding site.

It belongs to the D-isomer specific 2-hydroxyacid dehydrogenase family. PdxB subfamily. Homodimer.

The protein resides in the cytoplasm. It catalyses the reaction 4-phospho-D-erythronate + NAD(+) = (R)-3-hydroxy-2-oxo-4-phosphooxybutanoate + NADH + H(+). Its pathway is cofactor biosynthesis; pyridoxine 5'-phosphate biosynthesis; pyridoxine 5'-phosphate from D-erythrose 4-phosphate: step 2/5. Its function is as follows. Catalyzes the oxidation of erythronate-4-phosphate to 3-hydroxy-2-oxo-4-phosphonooxybutanoate. This is Erythronate-4-phosphate dehydrogenase from Shewanella baltica (strain OS223).